We begin with the raw amino-acid sequence, 340 residues long: Phosphoribosylformylglycinamidine cyclo-ligase (340 aa).

The protein belongs to the AIR synthase family.

The protein localises to the cytoplasm. The enzyme catalyses 2-formamido-N(1)-(5-O-phospho-beta-D-ribosyl)acetamidine + ATP = 5-amino-1-(5-phospho-beta-D-ribosyl)imidazole + ADP + phosphate + H(+). It participates in purine metabolism; IMP biosynthesis via de novo pathway; 5-amino-1-(5-phospho-D-ribosyl)imidazole from N(2)-formyl-N(1)-(5-phospho-D-ribosyl)glycinamide: step 2/2. In Streptococcus uberis (strain ATCC BAA-854 / 0140J), this protein is Phosphoribosylformylglycinamidine cyclo-ligase.